Here is a 116-residue protein sequence, read N- to C-terminus: UPF0342 protein BH1149 (116 aa).

It belongs to the UPF0342 family.

This is UPF0342 protein BH1149 from Halalkalibacterium halodurans (strain ATCC BAA-125 / DSM 18197 / FERM 7344 / JCM 9153 / C-125) (Bacillus halodurans).